Here is an 82-residue protein sequence, read N- to C-terminus: Hepcidin (82 aa).

The N-terminal stretch at 1–23 is a signal peptide; the sequence is MALSVQIRAACLLLLLLVSLTAG. Positions 24 to 53 are excised as a propeptide; that stretch reads SVLPSQTRQLTDLRTQDTAGATAGLTPVAQ. Intrachain disulfides connect Cys64-Cys80, Cys67-Cys70, Cys68-Cys76, and Cys71-Cys79.

Belongs to the hepcidin family. In terms of assembly, interacts with SLC40A1; this interaction promotes SLC40A1 rapid ubiquitination.

It is found in the secreted. Its function is as follows. Liver-produced hormone that constitutes the main circulating regulator of iron absorption and distribution across tissues. Acts by promoting endocytosis and degradation of ferroportin/SLC40A1, leading to the retention of iron in iron-exporting cells and decreased flow of iron into plasma. Controls the major flows of iron into plasma: absorption of dietary iron in the intestine, recycling of iron by macrophages, which phagocytose old erythrocytes and other cells, and mobilization of stored iron from hepatocytes. Functionally, has strong antimicrobial activity against E.coli ML35P N.cinerea and weaker against S.epidermidis, S.aureus and group b streptococcus bacteria. Active against the fungus C.albicans. No activity against P.aeruginosa. This chain is Hepcidin (HAMP), found in Sus scrofa (Pig).